The chain runs to 481 residues: MTTFVDRVVLHLQAGDGGHGCVSVHREKFKPFGGPDGGNGGHGGSVSLVVDPQVHTLLDFHFRPHVKAANGRGGAGSNRDGANGANLVLKVPNGTVVQSGDGTVLADLVGVGTTFEVARGGRGGRGNASLANARRKAPGFAELGEPGDQIDVVLELKSVADVGLVGYPSAGKSSLISVISAAKPKIADYPFTTLVPNLGVVRVDNHTFTVADVPGLIPGAATGKGLGLEFLRHIERCAVLLHVVDTAALETERDPVADIDAIEAELVAYGGLVDRPRLVALNKVDVPDGRDLAEIVRPDLEARGFRVFEVSAATRAGLKELMYAMGELVTAARAAAPPAEPTRIVIRPKAVDDAGFTVEAAPGGTWVVRGTRPERWVRQTNFDNEEAVGYLADRLARLGVEEKLGKAGAQAGDLVRIGEREFDWQPTLYTEFVPGVRGGDQRLAEKSERPSATERLAARKARRQRPEDEAEADEPVGDGEE.

The Obg domain occupies 2–159 (TTFVDRVVLH…IDVVLELKSV (158 aa)). Positions 160 to 330 (ADVGLVGYPS…LMYAMGELVT (171 aa)) constitute an OBG-type G domain. Residues 166–173 (GYPSAGKS), 191–195 (FTTLV), 212–215 (DVPG), 282–285 (NKVD), and 311–313 (SAA) contribute to the GTP site. Residues Ser173 and Thr193 each contribute to the Mg(2+) site. Residues 348 to 426 (PKAVDDAGFT…IGEREFDWQP (79 aa)) enclose the OCT domain. Over residues 439–452 (GDQRLAEKSERPSA) the composition is skewed to basic and acidic residues. The tract at residues 439–481 (GDQRLAEKSERPSATERLAARKARRQRPEDEAEADEPVGDGEE) is disordered. Over residues 468 to 481 (DEAEADEPVGDGEE) the composition is skewed to acidic residues.

It belongs to the TRAFAC class OBG-HflX-like GTPase superfamily. OBG GTPase family. As to quaternary structure, monomer. Mg(2+) is required as a cofactor.

The protein localises to the cytoplasm. Functionally, an essential GTPase which binds GTP, GDP and possibly (p)ppGpp with moderate affinity, with high nucleotide exchange rates and a fairly low GTP hydrolysis rate. Plays a role in control of the cell cycle, stress response, ribosome biogenesis and in those bacteria that undergo differentiation, in morphogenesis control. The protein is GTPase Obg of Salinispora tropica (strain ATCC BAA-916 / DSM 44818 / JCM 13857 / NBRC 105044 / CNB-440).